A 282-amino-acid chain; its full sequence is Nucleotide-binding protein ABO_0549 (282 aa).

8–15 (GRSGSGKT) is an ATP binding site. Position 59-62 (59-62 (DARN)) interacts with GTP.

This sequence belongs to the RapZ-like family.

Functionally, displays ATPase and GTPase activities. This Alcanivorax borkumensis (strain ATCC 700651 / DSM 11573 / NCIMB 13689 / SK2) protein is Nucleotide-binding protein ABO_0549.